We begin with the raw amino-acid sequence, 285 residues long: Cyclin-Y-like protein 1B (285 aa).

The Cyclin N-terminal domain maps to 111-209 (PKRNCIFRHF…CFLELLEFNI (99 aa)).

This sequence belongs to the cyclin family. Cyclin Y subfamily.

In Homo sapiens (Human), this protein is Cyclin-Y-like protein 1B.